The primary structure comprises 321 residues: ATP-dependent 6-phosphofructokinase (321 aa).

Position 12 (Gly12) interacts with ATP. Residues 22 to 26 and 55 to 60 each bind ADP; these read RGVVR and RYSVSD. Residues 73–74 and 103–106 each bind ATP; these read RF and GDGS. Asp104 is a Mg(2+) binding site. 127–129 contacts substrate; it reads TID. Asp129 functions as the Proton acceptor in the catalytic mechanism. Arg156 is a binding site for ADP. Substrate-binding positions include Arg164 and 171–173; that span reads MGR. Residues 187 to 189, Arg213, and 215 to 217 contribute to the ADP site; these read GCE and KRH. Substrate-binding positions include Glu224, Arg245, and 251-254; that span reads HIQR.

This sequence belongs to the phosphofructokinase type A (PFKA) family. ATP-dependent PFK group I subfamily. Prokaryotic clade 'B1' sub-subfamily. In terms of assembly, homotetramer. It depends on Mg(2+) as a cofactor.

It is found in the cytoplasm. It catalyses the reaction beta-D-fructose 6-phosphate + ATP = beta-D-fructose 1,6-bisphosphate + ADP + H(+). The protein operates within carbohydrate degradation; glycolysis; D-glyceraldehyde 3-phosphate and glycerone phosphate from D-glucose: step 3/4. Allosterically activated by ADP and other diphosphonucleosides, and allosterically inhibited by phosphoenolpyruvate. Its function is as follows. Catalyzes the phosphorylation of D-fructose 6-phosphate to fructose 1,6-bisphosphate by ATP, the first committing step of glycolysis. In Haemophilus influenzae (strain 86-028NP), this protein is ATP-dependent 6-phosphofructokinase.